Reading from the N-terminus, the 103-residue chain is Small ribosomal subunit protein uS10 (103 aa).

Belongs to the universal ribosomal protein uS10 family. In terms of assembly, part of the 30S ribosomal subunit.

Its function is as follows. Involved in the binding of tRNA to the ribosomes. In Chlorobaculum parvum (strain DSM 263 / NCIMB 8327) (Chlorobium vibrioforme subsp. thiosulfatophilum), this protein is Small ribosomal subunit protein uS10.